The sequence spans 390 residues: Galactokinase (390 aa).

35-38 contributes to the substrate binding site; it reads EHTD. 125-131 contacts ATP; sequence GAGLSSS. Mg(2+) is bound by residues S131 and E163. Residue D175 is the Proton acceptor of the active site. Residue Y224 participates in substrate binding.

Belongs to the GHMP kinase family. GalK subfamily.

It localises to the cytoplasm. The enzyme catalyses alpha-D-galactose + ATP = alpha-D-galactose 1-phosphate + ADP + H(+). Its pathway is carbohydrate metabolism; galactose metabolism. Catalyzes the transfer of the gamma-phosphate of ATP to D-galactose to form alpha-D-galactose-1-phosphate (Gal-1-P). In Proteus mirabilis (strain HI4320), this protein is Galactokinase.